Reading from the N-terminus, the 312-residue chain is Pyridoxal kinase (312 aa).

N-acetylmethionine is present on methionine 1. Pyridoxal-binding residues include serine 12 and threonine 47. Threonine 47 contributes to the pyridoxal 5'-phosphate binding site. Phosphoserine is present on serine 59. Aspartate 113 contacts ATP. Aspartate 113 serves as a coordination point for Na(+). Aspartate 118 is a Mg(2+) binding site. Threonine 148 is a Na(+) binding site. Residues 150 to 153 (NQFE) and 186 to 187 (TS) each bind ATP. Threonine 186 is a binding site for Na(+). Serine 213 carries the phosphoserine modification. ATP-binding positions include 226–228 (VDA) and threonine 233. 234 to 235 (GD) serves as a coordination point for pyridoxal 5'-phosphate. Catalysis depends on aspartate 235, which acts as the Proton acceptor. Phosphoserine is present on serine 285.

This sequence belongs to the pyridoxine kinase family. As to quaternary structure, homodimer. Zn(2+) is required as a cofactor. Mg(2+) serves as cofactor.

The protein localises to the cytoplasm. It localises to the cytosol. It carries out the reaction pyridoxal + ATP = pyridoxal 5'-phosphate + ADP + H(+). The enzyme catalyses pyridoxamine + ATP = pyridoxamine 5'-phosphate + ADP + H(+). The catalysed reaction is pyridoxine + ATP = pyridoxine 5'-phosphate + ADP + H(+). It participates in cofactor metabolism; pyridoxal 5'-phosphate salvage; pyridoxal 5'-phosphate from pyridoxal: step 1/1. Its pathway is cofactor metabolism; pyridoxal 5'-phosphate salvage; pyridoxine 5'-phosphate from pyridoxine: step 1/1. The protein operates within cofactor metabolism; pyridoxal 5'-phosphate salvage; pyridoxamine 5'-phosphate from pyridoxamine: step 1/1. With respect to regulation, activity is increased in the presence of K(+)or Na(+). Functionally, catalyzes the phosphorylation of the dietary vitamin B6 vitamers pyridoxal (PL), pyridoxine (PN) and pyridoxamine (PM) to form pyridoxal 5'-phosphate (PLP), pyridoxine 5'-phosphate (PNP) and pyridoxamine 5'-phosphate (PMP), respectively. PLP is the active form of vitamin B6, and acts as a cofactor for over 140 different enzymatic reactions. This chain is Pyridoxal kinase (PDXK), found in Bos taurus (Bovine).